The chain runs to 229 residues: Dolichyldiphosphatase 1 (229 aa).

4 helical membrane passes run 27-47 (LFNA…ITLI), 94-114 (MPSS…LFYL), 120-140 (FGSK…AAGV), and 156-176 (FCGS…IEYI).

It belongs to the dolichyldiphosphatase family.

The protein resides in the endoplasmic reticulum membrane. It carries out the reaction a di-trans,poly-cis-dolichyl diphosphate + H2O = a di-trans,poly-cis-dolichyl phosphate + phosphate + H(+). Its pathway is protein modification; protein glycosylation. Functionally, required for efficient N-glycosylation. Necessary for maintaining optimal levels of dolichol-linked oligosaccharides. Hydrolyzes dolichyl pyrophosphate at a very high rate and dolichyl monophosphate at a much lower rate. Does not act on phosphatidate. In Dictyostelium discoideum (Social amoeba), this protein is Dolichyldiphosphatase 1 (dolpp1).